We begin with the raw amino-acid sequence, 486 residues long: Coronin-1B (486 aa).

A Phosphoserine; by PKC modification is found at serine 2. 5 WD repeats span residues 80 to 120 (GHTG…LTSP), 130 to 170 (GHTK…ELYR), 174 to 213 (LHPD…LVAE), 217 to 260 (AHEG…EPMA), and 265 to 305 (DSSN…PYIH). The interval 404–444 (LKVSRRNVLSDSRPTSAARPAAPAPAAPAPAAAASSSLSGA) is disordered. Residues 432-444 (APAAAASSSLSGA) show a composition bias toward low complexity. Positions 446–484 (EAGKLEEVMRELRALRALVKEQGERIGRLEEQLGRVENG) form a coiled coil.

The protein belongs to the WD repeat coronin family. As to quaternary structure, forms homooligomers, but does not form complexes with the other coronins. Interacts with Arp2/3 complex components, including ACTR2, ARPC1B and ARPC2. Binds actin. In terms of processing, phosphorylated in vivo by PKC in response to cholinergic stimulation. Phosphorylation on Ser-2 regulates the interaction with the Arp2/3 complex and cell motility in fibroblasts. Phosphorylation does not seem to affect subcellular location.

The protein localises to the cytoplasm. It localises to the cytoskeleton. Its subcellular location is the stress fiber. Regulates leading edge dynamics and cell motility in fibroblasts. May be involved in cytokinesis and signal transduction. This is Coronin-1B (CORO1B) from Oryctolagus cuniculus (Rabbit).